A 475-amino-acid polypeptide reads, in one-letter code: Ataxin-10 (475 aa).

At arginine 10 the chain carries Omega-N-methylarginine. A phosphoserine mark is found at serine 12 and serine 77. Threonine 82 is subject to Phosphothreonine. The residue at position 430 (serine 430) is a Phosphoserine.

It belongs to the ataxin-10 family. Homooligomer. Interacts with GNB2. Interacts with IQCB1. Interacts with OGT. In terms of processing, polyubiquitinated. Phosphorylation at Ser-12 by AURKB promotes the association of ATXN10 with PLK1. Phosphorylation at Ser-77 and Thr-82 by PLK1 may play a role in the regulation of cytokinesis and may stimulate the proteasome-mediated degradation of ATXN10. In terms of tissue distribution, ubiquitous distribution. Markedly increased expression in testis, adrenals, and brain.

It is found in the cytoplasm. Its subcellular location is the perinuclear region. The protein resides in the midbody. The protein localises to the cytoskeleton. It localises to the cilium basal body. It is found in the microtubule organizing center. Its subcellular location is the centrosome. The protein resides in the centriole. In terms of biological role, may play a role in the regulation of cytokinesis. May play a role in signaling by stimulating protein glycosylation. Induces neuritogenesis by activating the Ras-MAP kinase pathway and is necessary for the survival of cerebellar neurons. Does not appear to play a major role in ciliogenesis. The protein is Ataxin-10 (Atxn10) of Rattus norvegicus (Rat).